A 332-amino-acid chain; its full sequence is Ketol-acid reductoisomerase (NADP(+)) (332 aa).

The KARI N-terminal Rossmann domain occupies Met-1–Thr-182. NADP(+) is bound by residues Tyr-25–Gln-28 and Asp-83–Gln-86. Residue His-108 is part of the active site. Gly-134 contributes to the NADP(+) binding site. In terms of domain architecture, KARI C-terminal knotted spans Thr-183–Leu-328. Mg(2+)-binding residues include Asp-191, Glu-195, Glu-227, and Glu-231. Residue Ser-252 coordinates substrate.

This sequence belongs to the ketol-acid reductoisomerase family. Mg(2+) is required as a cofactor.

The enzyme catalyses (2R)-2,3-dihydroxy-3-methylbutanoate + NADP(+) = (2S)-2-acetolactate + NADPH + H(+). The catalysed reaction is (2R,3R)-2,3-dihydroxy-3-methylpentanoate + NADP(+) = (S)-2-ethyl-2-hydroxy-3-oxobutanoate + NADPH + H(+). It functions in the pathway amino-acid biosynthesis; L-isoleucine biosynthesis; L-isoleucine from 2-oxobutanoate: step 2/4. Its pathway is amino-acid biosynthesis; L-valine biosynthesis; L-valine from pyruvate: step 2/4. In terms of biological role, involved in the biosynthesis of branched-chain amino acids (BCAA). Catalyzes an alkyl-migration followed by a ketol-acid reduction of (S)-2-acetolactate (S2AL) to yield (R)-2,3-dihydroxy-isovalerate. In the isomerase reaction, S2AL is rearranged via a Mg-dependent methyl migration to produce 3-hydroxy-3-methyl-2-ketobutyrate (HMKB). In the reductase reaction, this 2-ketoacid undergoes a metal-dependent reduction by NADPH to yield (R)-2,3-dihydroxy-isovalerate. The chain is Ketol-acid reductoisomerase (NADP(+)) from Dehalococcoides mccartyi (strain ATCC BAA-2266 / KCTC 15142 / 195) (Dehalococcoides ethenogenes (strain 195)).